Reading from the N-terminus, the 112-residue chain is Cell cycle protein GpsB (112 aa).

Residues Ile38 to Val72 are a coiled coil.

Belongs to the GpsB family. In terms of assembly, forms polymers through the coiled coil domains. Interacts with PBP1, MreC and EzrA.

It is found in the cytoplasm. In terms of biological role, divisome component that associates with the complex late in its assembly, after the Z-ring is formed, and is dependent on DivIC and PBP2B for its recruitment to the divisome. Together with EzrA, is a key component of the system that regulates PBP1 localization during cell cycle progression. Its main role could be the removal of PBP1 from the cell pole after pole maturation is completed. Also contributes to the recruitment of PBP1 to the division complex. Not essential for septum formation. The sequence is that of Cell cycle protein GpsB from Bacillus anthracis (strain A0248).